The sequence spans 884 residues: Alanine--tRNA ligase (884 aa).

Residues His-562, His-566, Cys-674, and His-678 each contribute to the Zn(2+) site.

This sequence belongs to the class-II aminoacyl-tRNA synthetase family. The cofactor is Zn(2+).

The protein resides in the cytoplasm. The catalysed reaction is tRNA(Ala) + L-alanine + ATP = L-alanyl-tRNA(Ala) + AMP + diphosphate. Its function is as follows. Catalyzes the attachment of alanine to tRNA(Ala) in a two-step reaction: alanine is first activated by ATP to form Ala-AMP and then transferred to the acceptor end of tRNA(Ala). Also edits incorrectly charged Ser-tRNA(Ala) and Gly-tRNA(Ala) via its editing domain. In Rhizobium johnstonii (strain DSM 114642 / LMG 32736 / 3841) (Rhizobium leguminosarum bv. viciae), this protein is Alanine--tRNA ligase.